Consider the following 436-residue polypeptide: O-phosphoseryl-tRNA(Sec) selenium transferase (436 aa).

Residues 1-44 (MLDFNIEGLIPKNMEKRGELVLNEYLKEIEDVFNHRKIPENGID) form a tetramerization region. Arg-72 provides a ligand contact to pyridoxal 5'-phosphate. The segment at 93–103 (GRSGNLVDPQP) is phosphate loop (P-loop). Positions 94, 95, and 102 each coordinate substrate. Position 278 is an N6-(pyridoxal phosphate)lysine (Lys-278). Arg-307 lines the substrate pocket.

It belongs to the SepSecS family. As to quaternary structure, homotetramer. Pyridoxal 5'-phosphate is required as a cofactor.

The enzyme catalyses O-phospho-L-seryl-tRNA(Sec) + selenophosphate + H2O = L-selenocysteinyl-tRNA(Sec) + 2 phosphate. It functions in the pathway aminoacyl-tRNA biosynthesis; selenocysteinyl-tRNA(Sec) biosynthesis; selenocysteinyl-tRNA(Sec) from L-seryl-tRNA(Sec) (archaeal/eukaryal route): step 2/2. In terms of biological role, converts O-phosphoseryl-tRNA(Sec) to selenocysteinyl-tRNA(Sec) required for selenoprotein biosynthesis. The protein is O-phosphoseryl-tRNA(Sec) selenium transferase (spcS) of Methanococcus maripaludis (strain DSM 14266 / JCM 13030 / NBRC 101832 / S2 / LL).